We begin with the raw amino-acid sequence, 263 residues long: 3-methyl-2-oxobutanoate hydroxymethyltransferase (263 aa).

Asp45 and Asp84 together coordinate Mg(2+). 3-methyl-2-oxobutanoate is bound by residues 45–46, Asp84, and Lys112; that span reads DS. Residue Glu114 coordinates Mg(2+). The active-site Proton acceptor is the Glu181.

Belongs to the PanB family. As to quaternary structure, homodecamer; pentamer of dimers. Mg(2+) serves as cofactor.

The protein resides in the cytoplasm. The catalysed reaction is 3-methyl-2-oxobutanoate + (6R)-5,10-methylene-5,6,7,8-tetrahydrofolate + H2O = 2-dehydropantoate + (6S)-5,6,7,8-tetrahydrofolate. The protein operates within cofactor biosynthesis; (R)-pantothenate biosynthesis; (R)-pantoate from 3-methyl-2-oxobutanoate: step 1/2. In terms of biological role, catalyzes the reversible reaction in which hydroxymethyl group from 5,10-methylenetetrahydrofolate is transferred onto alpha-ketoisovalerate to form ketopantoate. This Buchnera aphidicola subsp. Schizaphis graminum (strain Sg) protein is 3-methyl-2-oxobutanoate hydroxymethyltransferase.